A 216-amino-acid chain; its full sequence is ATP phosphoribosyltransferase (216 aa).

The protein belongs to the ATP phosphoribosyltransferase family. Short subfamily. In terms of assembly, heteromultimer composed of HisG and HisZ subunits.

It is found in the cytoplasm. It carries out the reaction 1-(5-phospho-beta-D-ribosyl)-ATP + diphosphate = 5-phospho-alpha-D-ribose 1-diphosphate + ATP. It participates in amino-acid biosynthesis; L-histidine biosynthesis; L-histidine from 5-phospho-alpha-D-ribose 1-diphosphate: step 1/9. In terms of biological role, catalyzes the condensation of ATP and 5-phosphoribose 1-diphosphate to form N'-(5'-phosphoribosyl)-ATP (PR-ATP). Has a crucial role in the pathway because the rate of histidine biosynthesis seems to be controlled primarily by regulation of HisG enzymatic activity. The protein is ATP phosphoribosyltransferase of Streptococcus thermophilus (strain ATCC BAA-491 / LMD-9).